A 475-amino-acid chain; its full sequence is Phosphoethanolamine N-methyltransferase 1 (475 aa).

It belongs to the class I-like SAM-binding methyltransferase superfamily.

The enzyme catalyses phosphoethanolamine + S-adenosyl-L-methionine = N-methylethanolamine phosphate + S-adenosyl-L-homocysteine + H(+). Its pathway is phospholipid metabolism; phosphatidylcholine biosynthesis; phosphocholine from phosphoethanolamine. With respect to regulation, feedback inhibition by phosphatidylcholine. Its function is as follows. Catalyzes the first step in the synthesis of phosphocholine by converting phosphoethanolamine into phospho-monomethylethanolamine (N-methylethanolamine phosphate). Phosphocholine is a precursor for phosphatidylcholine, a major component in membranes and a precursor itself in the production of glycoconjugates secreted by parasitic nematodes to avoid host immune responses. The polypeptide is Phosphoethanolamine N-methyltransferase 1 (Caenorhabditis elegans).